We begin with the raw amino-acid sequence, 210 residues long: Endo-1,4-beta-xylanase A (210 aa).

Positions 1-19 (MKLKKKMLTLLLTASMSFG) are cleaved as a signal peptide. The region spanning 20–210 (LFGATSSAAT…SSGRSNVTVW (191 aa)) is the GH11 domain. Glu104 functions as the Nucleophile in the catalytic mechanism. Residue Glu197 is the Proton donor of the active site.

This sequence belongs to the glycosyl hydrolase 11 (cellulase G) family.

The enzyme catalyses Endohydrolysis of (1-&gt;4)-beta-D-xylosidic linkages in xylans.. It participates in glycan degradation; xylan degradation. The sequence is that of Endo-1,4-beta-xylanase A (xynA) from Geobacillus stearothermophilus (Bacillus stearothermophilus).